The sequence spans 701 residues: MNNVLTTEIAGRELKVEFGKVGMLSNAATFTSYGDTVILTNVNASEQPREGIDFFPLSVEYEERLYAVGKIPGGFIKREGRPSEKAILNGRAVDRTLRPLFPKGYRNDVQVVTTVVSVEKDNLPEILAINAASLALCLSSIPYTIPAAAVQVGIIDGKFVTNPDTQGREKSILHLTVCATKERVMMIEAGGQEIPEDTMIDAIKYGFDECQKIIAFQEEAVAKFGKKKDEPVLYAVDPELEKDVKEFASDMIKEAMYIMEKDERNAAVDAVYEKVNEAFGEKYADKMGDIKEVLYTMQKKVVRHMLLKDKRRPDGRAFDQIRPLGCEIGILPRTHGTGLFTRGLTQVMTVATLGSISEIQILDGIDEAQSKRYMHHYNFPGYSVGEVKPLRGPGRREIGHGALAERALEPLIPSEEEFPYTIRLVSEVLSSNGSTSQASVCGSTLALLDAGVPIKRPAAGIAMGLITSEDLSEEAVLTDIQGIEDFFGDMDFKVAGTTEGITSIQVDTKLQGFSFNVVENAIRDARKARLTIIDKINECISTPKEDVSLYAPKTQIMSINPDKIRDVIGAGGKVINKIIQDTGVKIDIKEDGTVFVSSTDHNGVNEAIKIIEGLTKEVKAGEVYLGKVTKITTFGAFVEILPSKEGLVHISKLAKERVNKVEDVVSIGDEILVKVTEIDNQGRINLSRKDALVEQENKEEK.

Residues aspartate 485 and aspartate 491 each contribute to the Mg(2+) site. Residues 552–611 (PKTQIMSINPDKIRDVIGAGGKVINKIIQDTGVKIDIKEDGTVFVSSTDHNGVNEAIKII) form the KH domain. The S1 motif domain maps to 621–689 (GEVYLGKVTK…NQGRINLSRK (69 aa)).

It belongs to the polyribonucleotide nucleotidyltransferase family. It depends on Mg(2+) as a cofactor.

Its subcellular location is the cytoplasm. It catalyses the reaction RNA(n+1) + phosphate = RNA(n) + a ribonucleoside 5'-diphosphate. Its function is as follows. Involved in mRNA degradation. Catalyzes the phosphorolysis of single-stranded polyribonucleotides processively in the 3'- to 5'-direction. This is Polyribonucleotide nucleotidyltransferase from Clostridium beijerinckii (strain ATCC 51743 / NCIMB 8052) (Clostridium acetobutylicum).